A 655-amino-acid polypeptide reads, in one-letter code: Protein nipi-3 (655 aa).

The interval 1 to 35 (MARTKCKTKTVANPRTGVRKTAKDLSEPVRQDAVS) is disordered. A compositionally biased stretch (basic and acidic residues) spans 21–35 (TAKDLSEPVRQDAVS). The Protein kinase domain occupies 200 to 470 (IGIFVIYGTG…NQVNGDFPEI (271 aa)). Residues 206–214 (YGTGLVTRA) and lysine 235 each bind ATP.

The protein belongs to the protein kinase superfamily. CAMK Ser/Thr protein kinase family. As to quaternary structure, may interact with transcription factor cebp-1 (via N-terminus). As to expression, expressed in epidermis, pharynx, intestine, a subset of head neurons and motoneurons.

Its subcellular location is the nucleus. Its function is as follows. Adapter protein that regulates different signaling pathways. Required for larval development and viability. Involved in negatively modulating pmk-1 p38/MAPK signaling. Involved in innate immunity, acting either in a manner dependent upon, or independent of, the pmk-1 or pmk-3 p38/MAPK pathways. Has a protective role in response to infection by the Gram-negative bacterium P.aeruginosa, acting by negatively modulating expression of cebp-1, and regulating the pmk-1 p38/MAPK pathway, leading to activation of transcription factor skn-1. Required to prevent P.aeruginosa toxin ToxA-mediated lethality, probably acting via modulating the effects of translational inhibition caused by the toxin. By regulating the up-regulation in the epidermis of antimicrobial peptides nlp-29 and nlp-31, plays a role in resistance to fungal infection. This chain is Protein nipi-3, found in Caenorhabditis elegans.